A 92-amino-acid polypeptide reads, in one-letter code: Small ribosomal subunit protein uS19 (92 aa).

The protein belongs to the universal ribosomal protein uS19 family.

Functionally, protein S19 forms a complex with S13 that binds strongly to the 16S ribosomal RNA. This Roseobacter denitrificans (strain ATCC 33942 / OCh 114) (Erythrobacter sp. (strain OCh 114)) protein is Small ribosomal subunit protein uS19.